Consider the following 231-residue polypeptide: Trypsin (231 aa).

A propeptide spans 1–8 (FPTDDDDK) (activation peptide). The Peptidase S1 domain maps to 9-229 (IVGGYTCAAN…YVNWIQQTIA (221 aa)). Intrachain disulfides connect C15–C145, C33–C49, C117–C218, C124–C191, C156–C170, and C181–C205. The active-site Charge relay system is H48. E60, N62, V65, and E70 together coordinate Ca(2+). Catalysis depends on D92, which acts as the Charge relay system. Residue S185 is the Charge relay system of the active site.

It belongs to the peptidase S1 family. Ca(2+) is required as a cofactor.

Its subcellular location is the secreted. The protein localises to the extracellular space. The catalysed reaction is Preferential cleavage: Arg-|-Xaa, Lys-|-Xaa.. This chain is Trypsin, found in Sus scrofa (Pig).